The sequence spans 696 residues: DNA ligase (696 aa).

NAD(+)-binding positions include 36–40 (DAEYD), 85–86 (SL), and Glu123. Lys125 functions as the N6-AMP-lysine intermediate in the catalytic mechanism. Residues Arg146, Glu181, Lys319, and Lys343 each contribute to the NAD(+) site. Zn(2+) contacts are provided by Cys437, Cys440, Cys455, and Cys461. The region spanning 618-696 (PEGTSLAGKT…EDGLKALLGL (79 aa)) is the BRCT domain.

It belongs to the NAD-dependent DNA ligase family. LigA subfamily. The cofactor is Mg(2+). Mn(2+) serves as cofactor.

The enzyme catalyses NAD(+) + (deoxyribonucleotide)n-3'-hydroxyl + 5'-phospho-(deoxyribonucleotide)m = (deoxyribonucleotide)n+m + AMP + beta-nicotinamide D-nucleotide.. In terms of biological role, DNA ligase that catalyzes the formation of phosphodiester linkages between 5'-phosphoryl and 3'-hydroxyl groups in double-stranded DNA using NAD as a coenzyme and as the energy source for the reaction. It is essential for DNA replication and repair of damaged DNA. This is DNA ligase from Bordetella parapertussis (strain 12822 / ATCC BAA-587 / NCTC 13253).